A 213-amino-acid polypeptide reads, in one-letter code: MNDTTDIKHTSQLTSGDFTEAREPFALFEAWLAEATASEPNDPDAMALATADADGLPDLRMVLMKGFDARGFVFYSHIASAKGRELAANPKAALLFHWKSLRRQVRVRGPVTPVTDAEADAYFATRPRQAQIGAWASRQSRPLESRLAFEQAIAKEAAKYAIGAVPRPPGWSGWRITPLQFEFWHDRPFRLHDRIEFRRSALDVPWTKTRLYP.

FMN contacts are provided by residues 60 to 65 (RMVLMK), 75 to 76 (YS), Lys82, and Gln104. Lys65 is a binding site for substrate. Substrate contacts are provided by Tyr122 and Arg126. Residues 139–140 (QS) and Trp184 each bind FMN. 190–192 (RLH) lines the substrate pocket. Arg194 contacts FMN.

Belongs to the pyridoxamine 5'-phosphate oxidase family. In terms of assembly, homodimer. The cofactor is FMN.

The catalysed reaction is pyridoxamine 5'-phosphate + O2 + H2O = pyridoxal 5'-phosphate + H2O2 + NH4(+). It catalyses the reaction pyridoxine 5'-phosphate + O2 = pyridoxal 5'-phosphate + H2O2. The protein operates within cofactor metabolism; pyridoxal 5'-phosphate salvage; pyridoxal 5'-phosphate from pyridoxamine 5'-phosphate: step 1/1. It functions in the pathway cofactor metabolism; pyridoxal 5'-phosphate salvage; pyridoxal 5'-phosphate from pyridoxine 5'-phosphate: step 1/1. In terms of biological role, catalyzes the oxidation of either pyridoxine 5'-phosphate (PNP) or pyridoxamine 5'-phosphate (PMP) into pyridoxal 5'-phosphate (PLP). This chain is Pyridoxine/pyridoxamine 5'-phosphate oxidase, found in Nitrobacter winogradskyi (strain ATCC 25391 / DSM 10237 / CIP 104748 / NCIMB 11846 / Nb-255).